A 152-amino-acid chain; its full sequence is Xanthine-guanine phosphoribosyltransferase (152 aa).

5-phospho-alpha-D-ribose 1-diphosphate is bound by residues 37 to 38, arginine 69, and 88 to 96; these read RG and DDLVDTGGT. Residue arginine 69 coordinates GMP. Residue aspartate 89 coordinates Mg(2+). Residues aspartate 92 and isoleucine 135 each contribute to the guanine site. The xanthine site is built by aspartate 92 and isoleucine 135. GMP-binding positions include 92 to 96 and 134 to 135; these read DTGGT and WI.

The protein belongs to the purine/pyrimidine phosphoribosyltransferase family. XGPT subfamily. As to quaternary structure, homotetramer. Requires Mg(2+) as cofactor.

The protein resides in the cell inner membrane. It catalyses the reaction GMP + diphosphate = guanine + 5-phospho-alpha-D-ribose 1-diphosphate. The catalysed reaction is XMP + diphosphate = xanthine + 5-phospho-alpha-D-ribose 1-diphosphate. It carries out the reaction IMP + diphosphate = hypoxanthine + 5-phospho-alpha-D-ribose 1-diphosphate. Its pathway is purine metabolism; GMP biosynthesis via salvage pathway; GMP from guanine: step 1/1. It functions in the pathway purine metabolism; XMP biosynthesis via salvage pathway; XMP from xanthine: step 1/1. Purine salvage pathway enzyme that catalyzes the transfer of the ribosyl-5-phosphate group from 5-phospho-alpha-D-ribose 1-diphosphate (PRPP) to the N9 position of the 6-oxopurines guanine and xanthine to form the corresponding ribonucleotides GMP (guanosine 5'-monophosphate) and XMP (xanthosine 5'-monophosphate), with the release of PPi. To a lesser extent, also acts on hypoxanthine. The polypeptide is Xanthine-guanine phosphoribosyltransferase (Pectobacterium atrosepticum (strain SCRI 1043 / ATCC BAA-672) (Erwinia carotovora subsp. atroseptica)).